The following is a 200-amino-acid chain: Glycerol-3-phosphate acyltransferase (200 aa).

5 helical membrane-spanning segments follow: residues 2 to 22, 51 to 71, 84 to 104, 114 to 134, and 159 to 179; these read FNIP…AVIV, KAAA…VLLA, AIAA…FFGF, LGVL…IWLV, and FFMP…LVLF.

Belongs to the PlsY family. As to quaternary structure, probably interacts with PlsX.

It localises to the cell inner membrane. The enzyme catalyses an acyl phosphate + sn-glycerol 3-phosphate = a 1-acyl-sn-glycero-3-phosphate + phosphate. Its pathway is lipid metabolism; phospholipid metabolism. Its function is as follows. Catalyzes the transfer of an acyl group from acyl-phosphate (acyl-PO(4)) to glycerol-3-phosphate (G3P) to form lysophosphatidic acid (LPA). This enzyme utilizes acyl-phosphate as fatty acyl donor, but not acyl-CoA or acyl-ACP. The sequence is that of Glycerol-3-phosphate acyltransferase from Neisseria meningitidis serogroup B (strain ATCC BAA-335 / MC58).